The chain runs to 143 residues: Transcriptional regulator MraZ (143 aa).

SpoVT-AbrB domains lie at 5 to 47 and 76 to 119; these read EYQH…PQDE and ATEC…SKER.

This sequence belongs to the MraZ family. Forms oligomers.

The protein localises to the cytoplasm. The protein resides in the nucleoid. This Brevibacillus brevis (strain 47 / JCM 6285 / NBRC 100599) protein is Transcriptional regulator MraZ.